We begin with the raw amino-acid sequence, 157 residues long: Protein Smg homolog (157 aa).

Belongs to the Smg family.

The protein is Protein Smg homolog of Shewanella loihica (strain ATCC BAA-1088 / PV-4).